Reading from the N-terminus, the 535-residue chain is Succinate-semialdehyde dehydrogenase, mitochondrial (535 aa).

The N-terminal 47 residues, 1 to 47, are a transit peptide targeting the mitochondrion; the sequence is MATCIWLRSCGARRLGWTFPGCRLRPRAGGLVPASGPAPGPAQLRCY. Lys126 is subject to N6-acetyllysine; alternate. An N6-succinyllysine; alternate modification is found at Lys126. Residues Lys135 and Lys184 each carry the N6-succinyllysine modification. Residues Arg213 and 228–231 contribute to the NAD(+) site; that span reads KPAE. Arg213 contributes to the substrate binding site. Position 265 is an N6-acetyllysine; alternate (Lys265). Lys265 carries the post-translational modification N6-succinyllysine; alternate. 284–289 lines the NAD(+) pocket; the sequence is GSTTTG. The Proton acceptor role is filled by Glu306. Arg334 provides a ligand contact to substrate. Cys340 (nucleophile) is an active-site residue. A disulfide bridge links Cys340 with Cys342. Residue Lys365 is modified to N6-acetyllysine. Position 402 is an N6-succinyllysine (Lys402). At Lys411 the chain carries N6-acetyllysine. Residue Ser498 participates in substrate binding. Position 499 is a phosphoserine (Ser499).

It belongs to the aldehyde dehydrogenase family. Homotetramer.

The protein localises to the mitochondrion. It catalyses the reaction succinate semialdehyde + NAD(+) + H2O = succinate + NADH + 2 H(+). The protein operates within amino-acid degradation; 4-aminobutanoate degradation. With respect to regulation, redox-regulated. Inhibited under oxydizing conditions. Its function is as follows. Catalyzes one step in the degradation of the inhibitory neurotransmitter gamma-aminobutyric acid (GABA). The polypeptide is Succinate-semialdehyde dehydrogenase, mitochondrial (ALDH5A1) (Pan paniscus (Pygmy chimpanzee)).